Consider the following 461-residue polypeptide: Glycerol-3-phosphate acyltransferase, chloroplastic (461 aa).

The transit peptide at 1 to 96 directs the protein to the chloroplast; the sequence is MSMTGSSAYY…SPPNMSASVS (96 aa). Positions 47–76 are enriched in low complexity; it reads LLSSTSSSSSSSISLRSSTAPSPSCSSVTP. A disordered region spans residues 47–88; sequence LLSSTSSSSSSSISLRSSTAPSPSCSSVTPKDNCLASAKHSP. The HXXXXD motif signature appears at 231–236; the sequence is HQTEAD.

The protein belongs to the GPAT/DAPAT family.

The protein resides in the plastid. Its subcellular location is the chloroplast stroma. It carries out the reaction sn-glycerol 3-phosphate + an acyl-CoA = a 1-acyl-sn-glycero-3-phosphate + CoA. Its pathway is phospholipid metabolism; CDP-diacylglycerol biosynthesis; CDP-diacylglycerol from sn-glycerol 3-phosphate: step 1/3. Esterifies acyl-group from acyl-ACP to the sn-1 position of glycerol-3-phosphate. The enzyme from chilling-resistant plants discriminates against non-fluid palmitic acid and selects oleic acid whereas the enzyme from sensitive plants accepts both fatty acids. The sequence is that of Glycerol-3-phosphate acyltransferase, chloroplastic (PLSB) from Phaseolus vulgaris (Kidney bean).